The chain runs to 644 residues: Threonine--tRNA ligase (644 aa).

Residues 1 to 62 (MSFSVTLPDG…DSDVEIAIIT (62 aa)) enclose the TGS domain. Residues 240-538 (DHRTIGRDLD…LTEIYKGAFP (299 aa)) form a catalytic region. The Zn(2+) site is built by cysteine 334, histidine 385, and histidine 515.

It belongs to the class-II aminoacyl-tRNA synthetase family. As to quaternary structure, homodimer. Requires Zn(2+) as cofactor.

Its subcellular location is the cytoplasm. The catalysed reaction is tRNA(Thr) + L-threonine + ATP = L-threonyl-tRNA(Thr) + AMP + diphosphate + H(+). In terms of biological role, catalyzes the attachment of threonine to tRNA(Thr) in a two-step reaction: L-threonine is first activated by ATP to form Thr-AMP and then transferred to the acceptor end of tRNA(Thr). Also edits incorrectly charged L-seryl-tRNA(Thr). The sequence is that of Threonine--tRNA ligase from Lactobacillus acidophilus (strain ATCC 700396 / NCK56 / N2 / NCFM).